Reading from the N-terminus, the 174-residue chain is I-Kappa-B like protein C1 (174 aa).

2 ANK repeats span residues 56–88 and 93–123; these read RGRQ…DINA and TGNS…NLGA.

This sequence belongs to the polydnaviridae I-Kappa-B-like protein family.

Functionally, suppresses the host immune response through NF-kappa-B inactivation. Possesses ankyrin repeat domains required for NF-kappa-B binding but lacks the regulatory regions required for dissociation from NF-kappa-B and degradation. Therefore, prevents host NF-kappa-B release and subsequent activation. In Microplitis demolitor bracovirus (isolate Webb) (MdBV), this protein is I-Kappa-B like protein C1 (C1).